The following is a 76-amino-acid chain: Sulfur carrier protein TusA (76 aa).

C14 serves as the catalytic Cysteine persulfide intermediate.

It belongs to the sulfur carrier protein TusA family. As to quaternary structure, interacts with IscS.

It localises to the cytoplasm. Its pathway is tRNA modification. Its function is as follows. Sulfur carrier protein involved in sulfur trafficking in the cell. Part of a sulfur-relay system required for 2-thiolation during synthesis of 2-thiouridine of the modified wobble base 5-methylaminomethyl-2-thiouridine (mnm(5)s(2)U) in tRNA. Interacts with IscS and stimulates its cysteine desulfurase activity. Accepts an activated sulfur from IscS, which is then transferred to TusD, and thus determines the direction of sulfur flow from IscS to 2-thiouridine formation. Also appears to be involved in sulfur transfer for the biosynthesis of molybdopterin. This is Sulfur carrier protein TusA from Buchnera aphidicola subsp. Acyrthosiphon pisum (strain 5A).